Reading from the N-terminus, the 161-residue chain is Zinc finger A20 and AN1 domain-containing stress-associated protein 9 (161 aa).

The segment at 17–51 (PEAPILCVNNCGFFGSSMTNNMCSKCYRDFVKVTT) adopts an A20-type zinc-finger fold. Zn(2+)-binding residues include cysteine 23, cysteine 27, cysteine 39, and cysteine 42. A disordered region spans residues 62 to 99 (FTPASSSKTPLEPAKPDEVPAAAVEDKQAAQEPPKPPS). Residues 75–90 (AKPDEVPAAAVEDKQA) are compositionally biased toward basic and acidic residues. An AN1-type zinc finger spans residues 96 to 142 (KPPSNRCLSCRKKVGLTGFQCRCGGTFCSTHRYTEAHDCTFDYKKAG). Cysteine 102, cysteine 105, cysteine 116, cysteine 118, cysteine 123, histidine 126, histidine 132, and cysteine 134 together coordinate Zn(2+).

In terms of biological role, may be involved in environmental stress response. This chain is Zinc finger A20 and AN1 domain-containing stress-associated protein 9 (SAP9), found in Oryza sativa subsp. japonica (Rice).